The sequence spans 475 residues: Glycogen synthase (475 aa).

Lys15 serves as a coordination point for ADP-alpha-D-glucose.

The protein belongs to the glycosyltransferase 1 family. Bacterial/plant glycogen synthase subfamily.

The enzyme catalyses [(1-&gt;4)-alpha-D-glucosyl](n) + ADP-alpha-D-glucose = [(1-&gt;4)-alpha-D-glucosyl](n+1) + ADP + H(+). It functions in the pathway glycan biosynthesis; glycogen biosynthesis. Functionally, synthesizes alpha-1,4-glucan chains using ADP-glucose. In Anaeromyxobacter sp. (strain K), this protein is Glycogen synthase.